Reading from the N-terminus, the 417-residue chain is Dibenzothiophene monooxygenase (417 aa).

FMN is bound by residues Tyr96, 129-134, 159-163, Arg282, 369-370, and His391; these read NASSEN, KHFCS, and AR. The segment at 131-142 is lid loop; sequence SSENNSHVLDWK.

Belongs to the DszC flavin monooxygenase family. Homotetramer. Homodimer. Requires FAD as cofactor. NADH serves as cofactor.

It is found in the cytoplasm. The enzyme catalyses dibenzothiophene + 2 FMNH2 + 2 O2 = dibenzothiophene 5,5-dioxide + 2 FMN + 2 H2O + 2 H(+). The catalysed reaction is dibenzothiophene + FMNH2 + O2 = dibenzothiophene 5-oxide + FMN + H2O + H(+). It carries out the reaction dibenzothiophene 5-oxide + FMNH2 + O2 = dibenzothiophene 5,5-dioxide + FMN + H2O + H(+). It functions in the pathway sulfur metabolism; dibenzothiophene degradation. Functionally, catalyzes the first step of the '4S' desulfurization pathway that removes covalently bound sulfur from dibenzothiophene (DBT) without breaking carbon-carbon bonds. Sulfur dioxygenase which converts DBT to DBT-sulfone (DBTO2 or DBT 5,5-dioxide) in a stepwise manner. In DBTO (dibenzothiophene-5-oxide) was reported not to be a substrate, in it is reported to be a substrate. Can also use benzyl sulfide and benzyl sulfoxide as substrates, although benzyl sulfoxide is a poor substrate. The pathway substrate specificity has been augmented using mutagenesis, however no mutations allowed use of alkylated thiophenes. This chain is Dibenzothiophene monooxygenase, found in Rhodococcus qingshengii.